Reading from the N-terminus, the 145-residue chain is Large ribosomal subunit protein mL43 (145 aa).

The protein belongs to the mitochondrion-specific ribosomal protein mL43 family. As to quaternary structure, component of the mitochondrial large ribosomal subunit (mt-LSU). Mature yeast 74S mitochondrial ribosomes consist of a small (37S) and a large (54S) subunit. The 37S small subunit contains a 15S ribosomal RNA (15S mt-rRNA) and at least 32 different proteins. The 54S large subunit contains a 21S rRNA (21S mt-rRNA) and at least 45 different proteins.

Its subcellular location is the mitochondrion. Its function is as follows. Component of the mitochondrial ribosome (mitoribosome), a dedicated translation machinery responsible for the synthesis of mitochondrial genome-encoded proteins, including at least some of the essential transmembrane subunits of the mitochondrial respiratory chain. The mitoribosomes are attached to the mitochondrial inner membrane and translation products are cotranslationally integrated into the membrane. Also has an extraribosomal function, being essential for mitochondrial genome integrity. May interact with MHR1 to take part in the mtDNA repair mechanism. The polypeptide is Large ribosomal subunit protein mL43 (mrpl51) (Schizosaccharomyces pombe (strain 972 / ATCC 24843) (Fission yeast)).